The sequence spans 146 residues: Hemoglobin subunit beta-1/2 (146 aa).

At valine 1 the chain carries N-acetylvaline. The region spanning 2–146 (HLTPDEKNAV…VATALAHKYH (145 aa)) is the Globin domain. Residue serine 44 is modified to Phosphoserine. N6-acetyllysine is present on lysine 59. Histidine 63 and histidine 92 together coordinate heme b. Cysteine 93 bears the S-nitrosocysteine mark. Residue lysine 144 is modified to N6-acetyllysine.

It belongs to the globin family. In terms of assembly, heterotetramer of two alpha chains and two beta chains. As to expression, red blood cells.

Functionally, involved in oxygen transport from the lung to the various peripheral tissues. This Otolemur crassicaudatus (Brown greater galago) protein is Hemoglobin subunit beta-1/2 (HBB).